A 1079-amino-acid polypeptide reads, in one-letter code: MAWFGYCLALLALTWHSSAYGPDQRAQKKGDIILGGLFPIHFGVAAKDQDLKSRPESVECIRYNFRGFRWLQAMIFAIEEINSSPALLPNMTLGYRIFDTCNTVSKALEATLSFVAQNKIDSLNLDEFCNCSEHIPSTIAVVGATGSGVSTAVANLLGLFYIPQVSYASSSRLLSNKNQFKSFLRTIPNDEHQATAMADIIEYFRWNWVGTIAADDDYGRPGIEKFREEAEERDICIDFSELISQYSDEEEIQQVVEVIQNSTAKVIVVFSSGPDLEPLIKEIVRRNITGRIWLASEAWASSSLIAMPEYFHVVGGTIGFGLKAGQIPGFREFLQKVHPRKSVHNGFAKEFWEETFNCHLQDGAKGPLPVDTFVRSHEEGGNRLLNSSTAFRPLCTGDENINSVETPYMDYEHLRISYNVYLAVYSIAHALQDIYTCLPGRGLFTNGSCADIKKVEAWQVLKHLRHLNFTNNMGEQVTFDECGDLVGNYSIINWHLSPEDGSIVFKEVGYYNVYAKKGERLFINEGKILWSGFSREVPFSNCSRDCQAGTRKGIIEGEPTCCFECVECPDGEYSGETDASACDKCPDDFWSNENHTSCIAKEIEFLAWTEPFGIALTLFAVLGIFLTAFVLGVFIKFRNTPIVKATNRELSYLLLFSLLCCFSSSLFFIGEPQDWTCRLRQPAFGISFVLCISCILVKTNRVLLVFEAKIPTSFHRKWWGLNLQFLLVFLCTFMQIVICIIWLYTAPPSSYRNHELEDEIIFITCHEGSLMALGSLIGYTCLLAAICFFFAFKSRKLPENFNEAKFITFSMLIFFIVWISFIPAYASTYGKFVSAVEVIAILAASFGLLACIFFNKVYIILFKPSRNTIEEVRSSTAAHAFKVAARATLRRPNISRKRSSSLGGSTGSIPSSSISSKSNSEDRFPQPERQKQQQPLALTQQEQQQQPLTLQPQQQQQPQQPRCKQKVIFGSGTVTFSLSFDEPQKNAMAHRNSMRQNSLEAQKSNDTLNRHQALLPLQCAEADSEMTIQETGLQGPMVGDHQPEIESPDEMSPALVMSTSRSFVISGGGSSVTENILHS.

An N-terminal signal peptide occupies residues 1-19 (MAWFGYCLALLALTWHSSA). Residues 20–610 (YGPDQRAQKK…KEIEFLAWTE (591 aa)) lie on the Extracellular side of the membrane. The segment at 22–188 (PDQRAQKKGD…QFKSFLRTIP (167 aa)) is ligand-binding 1 (LB1). A disulfide bridge connects residues Cys60 and Cys101. A phosphate-binding site is contributed by 66–70 (RGFRW). Residues Ile81, Ser84, Leu87, and Leu88 each contribute to the Ca(2+) site. Residue Asn90 is glycosylated (N-linked (GlcNAc...) asparagine). Thr100 lines the Ca(2+) pocket. N-linked (GlcNAc...) asparagine glycosylation occurs at Asn130. Thr145 is a Ca(2+) binding site. 3 residues coordinate L-tryptophan: Ser147, Ala168, and Ser170. 5 residues coordinate Ca(2+): Ser170, Pro188, Asp190, Glu231, and Asp234. Residues 189–324 (NDEHQATAMA…GGTIGFGLKA (136 aa)) form a ligand-binding 2 (LB2) region. Intrachain disulfides connect Cys236–Cys561, Cys358–Cys395, Cys437–Cys449, Cys542–Cys562, Cys546–Cys565, Cys568–Cys582, and Cys585–Cys598. Asp238 and Ser240 together coordinate spermine. 2 N-linked (GlcNAc...) asparagine glycosylation sites follow: Asn261 and Asn287. Glu297 lines the Ca(2+) pocket. Glu297 is an L-tryptophan binding site. Asn386 carries an N-linked (GlcNAc...) asparagine glycan. Phosphate is bound at residue 415 to 417 (RIS). 3 N-linked (GlcNAc...) asparagine glycosylation sites follow: Asn446, Asn468, and Asn488. Tyr489 is a Ca(2+) binding site. The N-linked (GlcNAc...) asparagine glycan is linked to Asn541. The tract at residues 542–612 (CSRDCQAGTR…IEFLAWTEPF (71 aa)) is cysteine-rich (CR). Gly557 contributes to the Ca(2+) binding site. Asn594 is a glycosylation site (N-linked (GlcNAc...) asparagine). Residues 611 to 636 (PFGIALTLFAVLGIFLTAFVLGVFIK) form a helical membrane-spanning segment. Over 637–648 (FRNTPIVKATNR) the chain is Cytoplasmic. The tract at residues 637 to 648 (FRNTPIVKATNR) is intracellular loop 1 (ICL1). The chain crosses the membrane as a helical span at residues 649–668 (ELSYLLLFSLLCCFSSSLFF). The Extracellular portion of the chain corresponds to 669-674 (IGEPQD). Residues 675-698 (WTCRLRQPAFGISFVLCISCILVK) form a helical membrane-spanning segment. At 699 to 722 (TNRVLLVFEAKIPTSFHRKWWGLN) the chain is on the cytoplasmic side. Residues 699–722 (TNRVLLVFEAKIPTSFHRKWWGLN) form an intracellular loop 2 (ICL2) region. Residues 723–745 (LQFLLVFLCTFMQIVICIIWLYT) traverse the membrane as a helical segment. Residues 746 to 769 (APPSSYRNHELEDEIIFITCHEGS) lie on the Extracellular side of the membrane. Residues 770–789 (LMALGSLIGYTCLLAAICFF) traverse the membrane as a helical segment. Residues 790–805 (FAFKSRKLPENFNEAK) are Cytoplasmic-facing. The intracellular loop 3 (ICL3) stretch occupies residues 790-805 (FAFKSRKLPENFNEAK). A helical transmembrane segment spans residues 806 to 828 (FITFSMLIFFIVWISFIPAYAST). Over 829-832 (YGKF) the chain is Extracellular. A helical transmembrane segment spans residues 833–854 (VSAVEVIAILAASFGLLACIFF). The Cytoplasmic portion of the chain corresponds to 855 to 1079 (NKVYIILFKP…SSVTENILHS (225 aa)). Residues 855–1079 (NKVYIILFKP…SSVTENILHS (225 aa)) form a C-terminus region. The interaction with RNF19A stretch occupies residues 880–900 (AFKVAARATLRRPNISRKRSS). Position 888 is a phosphothreonine (Thr888). Positions 890-898 (RRPNISRKR) are arginine-rich retention motif. The interval 894–964 (ISRKRSSSLG…QQQPQQPRCK (71 aa)) is disordered. Residue Ser899 is modified to Phosphoserine. Residues 900 to 918 (SSLGGSTGSIPSSSISSKS) are compositionally biased toward low complexity. Residues 919–931 (NSEDRFPQPERQK) are compositionally biased toward basic and acidic residues. Phosphoserine is present on Ser920. The span at 932–961 (QQQPLALTQQEQQQQPLTLQPQQQQQPQQP) shows a compositional bias: low complexity. Position 1062 is a phosphoserine (Ser1062).

Belongs to the G-protein coupled receptor 3 family. Homodimer; disulfide-linked. Interacts with VCP. Interacts with ARRB1. Post-translationally, phosphorylation at Thr-888 by PKC impairs coupling with G(q)/G(11) G-proteins, while it does not affect G(i)/G(o)-coupling. Phosphorylation at Ser-899 by PKA promote plasma membrane localization. In terms of processing, ubiquitinated by RNF19A; which induces proteasomal degradation. In terms of tissue distribution, epidermis, kidney and cartilage.

Its subcellular location is the cell membrane. In resting state, adopts an open conformation, anion-binding promoting the inactive configuration. Upon aromatic amino acid-binding, the groove in the extracellular venus flytrap module is closed, thereby inducing the formation of a novel homodimer interface between subunits. Calcium ions stabilize the active state by enhancing homodimer interactions between membrane-proximal domains to fully activate the receptor. Upon activation, the homodimer adopts an asymmetric configuration of the 7-transmembrane region that primes one protomer for G-protein coupling. G-protein binding expands the transmembrane dimer interface; the restriction imposed by the receptor dimer, in combination with intracellular loop 2 (ICL2), enables G-protein activation by facilitating conformational transition of G-protein alpha. Coupling to different classes of G-proteins results in distinct CASR-G-protein interfaces. Its function is as follows. G-protein-coupled receptor that senses changes in the extracellular concentration of calcium ions and plays a key role in maintaining calcium homeostasis. Senses fluctuations in the circulating calcium concentration: activated by elevated circulating calcium, leading to decreased parathyroid hormone (PTH) secretion in parathyroid glands. In kidneys, acts as a key regulator of renal tubular calcium resorption. Ligand binding causes a conformation change that triggers signaling via guanine nucleotide-binding proteins (G-proteins) and modulates the activity of downstream effectors. CASR is coupled with different G(q)/G(11), G(i)/G(o)- or G(s)-classes of G-proteins depending on the context. In the parathyroid and kidney, CASR signals through G(q)/G(11) and G(i)/G(o) G-proteins: G(q)/G(11) coupling activates phospholipase C-beta, releasing diacylglycerol (DAG) and inositol 1,4,5-trisphosphate (IP3) second messengers, while G(i)/G(o) coupling mediates inhibition of adenylate cyclase activity. The G-protein-coupled receptor activity is activated by a co-agonist mechanism: aromatic amino acids, such as Trp or Phe, act concertedly with divalent cations, such as calcium or magnesium, to achieve full receptor activation. Acts as an activator of the NLRP3 inflammasome via G(i)/G(o)-mediated signaling: down-regulation of cyclic AMP (cAMP) relieving NLRP3 inhibition by cAMP. Acts as a regulator of proton-sensing receptor GPR68 in a seesaw manner: CASR-mediated signaling inhibits GPR68 signaling in response to extracellular calcium, while GPR68 inhibits CASR in presence of extracellular protons. The chain is Extracellular calcium-sensing receptor from Mus musculus (Mouse).